Here is a 491-residue protein sequence, read N- to C-terminus: UDP-N-acetylmuramate--L-alanine ligase (491 aa).

Residue Gly126–Thr132 participates in ATP binding.

The protein belongs to the MurCDEF family.

The protein localises to the cytoplasm. The enzyme catalyses UDP-N-acetyl-alpha-D-muramate + L-alanine + ATP = UDP-N-acetyl-alpha-D-muramoyl-L-alanine + ADP + phosphate + H(+). Its pathway is cell wall biogenesis; peptidoglycan biosynthesis. Its function is as follows. Cell wall formation. This Shigella dysenteriae serotype 1 (strain Sd197) protein is UDP-N-acetylmuramate--L-alanine ligase.